The chain runs to 149 residues: Small ribosomal subunit protein uS9 (149 aa).

Belongs to the universal ribosomal protein uS9 family.

The protein localises to the cytoplasm. The chain is Small ribosomal subunit protein uS9 (RPS16A) from Oryza sativa subsp. indica (Rice).